The following is an 83-amino-acid chain: MADATEKAEHDRIFKKFDANGDGKISASELGDALKNLGSVTHDDIKRMMAEIDTDGDGYISYQEFSDFASANRGLMKDVAKIF.

2 consecutive EF-hand domains span residues 5–40 (TEKA…LGSV) and 43–75 (DDIK…NRGL). 10 residues coordinate Ca(2+): Asp-18, Asn-20, Asp-22, Lys-24, Glu-29, Asp-53, Asp-55, Asp-57, Tyr-59, and Glu-64.

This is Polcalcin Bra r 2 from Brassica campestris (Field mustard).